The sequence spans 266 residues: Imidazole glycerol phosphate synthase subunit HisF (266 aa).

Residues aspartate 11 and aspartate 130 contribute to the active site.

It belongs to the HisA/HisF family. As to quaternary structure, heterodimer of HisH and HisF.

It localises to the cytoplasm. The enzyme catalyses 5-[(5-phospho-1-deoxy-D-ribulos-1-ylimino)methylamino]-1-(5-phospho-beta-D-ribosyl)imidazole-4-carboxamide + L-glutamine = D-erythro-1-(imidazol-4-yl)glycerol 3-phosphate + 5-amino-1-(5-phospho-beta-D-ribosyl)imidazole-4-carboxamide + L-glutamate + H(+). Its pathway is amino-acid biosynthesis; L-histidine biosynthesis; L-histidine from 5-phospho-alpha-D-ribose 1-diphosphate: step 5/9. IGPS catalyzes the conversion of PRFAR and glutamine to IGP, AICAR and glutamate. The HisF subunit catalyzes the cyclization activity that produces IGP and AICAR from PRFAR using the ammonia provided by the HisH subunit. The protein is Imidazole glycerol phosphate synthase subunit HisF of Albidiferax ferrireducens (strain ATCC BAA-621 / DSM 15236 / T118) (Rhodoferax ferrireducens).